The chain runs to 215 residues: Leucyl/phenylalanyl-tRNA--protein transferase (215 aa).

This sequence belongs to the L/F-transferase family.

It is found in the cytoplasm. It catalyses the reaction N-terminal L-lysyl-[protein] + L-leucyl-tRNA(Leu) = N-terminal L-leucyl-L-lysyl-[protein] + tRNA(Leu) + H(+). The enzyme catalyses N-terminal L-arginyl-[protein] + L-leucyl-tRNA(Leu) = N-terminal L-leucyl-L-arginyl-[protein] + tRNA(Leu) + H(+). The catalysed reaction is L-phenylalanyl-tRNA(Phe) + an N-terminal L-alpha-aminoacyl-[protein] = an N-terminal L-phenylalanyl-L-alpha-aminoacyl-[protein] + tRNA(Phe). Functionally, functions in the N-end rule pathway of protein degradation where it conjugates Leu, Phe and, less efficiently, Met from aminoacyl-tRNAs to the N-termini of proteins containing an N-terminal arginine or lysine. In Campylobacter jejuni subsp. doylei (strain ATCC BAA-1458 / RM4099 / 269.97), this protein is Leucyl/phenylalanyl-tRNA--protein transferase.